The chain runs to 305 residues: uncharacterized protein (305 aa).

This sequence belongs to the IIV-6 436R family.

This is an uncharacterized protein from Acheta domesticus (House cricket).